The sequence spans 477 residues: Diacylglycerol O-acyltransferase 1-2 (477 aa).

Residues 1–48 are disordered; sequence MAPPPSLAPDRGGGEPDDALRLRARAAAAAGDAPAPQQQQEQRHQEQQ. Positions 12 to 21 are enriched in basic and acidic residues; it reads GGGEPDDALR. Residues 25-40 are compositionally biased toward low complexity; sequence RAAAAAGDAPAPQQQQ. The next 7 helical transmembrane spans lie at 79-99, 123-143, 155-175, 182-202, 230-250, 263-283, and 319-339; these read HAGL…RLII, WPLL…LMVE, VVIL…VVVI, VLSG…LVSF, NIKW…TLCY, GWVV…GFII, and VWLC…AELL. The FYXDWWN motif signature appears at 346–352; the sequence is FYKDWWN. 3 consecutive transmembrane segments (helical) span residues 387-407, 409-429, and 442-462; these read GVAI…CVAV, CHIF…LVFL, and VGNM…CVLL. H401 is an active-site residue.

The protein belongs to the membrane-bound acyltransferase family. Sterol o-acyltransferase subfamily.

The protein resides in the endoplasmic reticulum membrane. The enzyme catalyses an acyl-CoA + a 1,2-diacyl-sn-glycerol = a triacyl-sn-glycerol + CoA. The protein operates within glycerolipid metabolism; triacylglycerol biosynthesis. In terms of biological role, involved in triacylglycerol (TAG) synthesis. Catalyzes the acylation of the sn-3 hydroxy group of sn-1,2-diacylglycerol using acyl-CoA. This is Diacylglycerol O-acyltransferase 1-2 from Oryza sativa subsp. japonica (Rice).